The chain runs to 306 residues: Homoserine kinase (306 aa).

95-105 (PHSRGLGSSAA) is an ATP binding site.

It belongs to the GHMP kinase family. Homoserine kinase subfamily.

It is found in the cytoplasm. It catalyses the reaction L-homoserine + ATP = O-phospho-L-homoserine + ADP + H(+). It functions in the pathway amino-acid biosynthesis; L-threonine biosynthesis; L-threonine from L-aspartate: step 4/5. Catalyzes the ATP-dependent phosphorylation of L-homoserine to L-homoserine phosphate. In Mycobacteroides abscessus (strain ATCC 19977 / DSM 44196 / CCUG 20993 / CIP 104536 / JCM 13569 / NCTC 13031 / TMC 1543 / L948) (Mycobacterium abscessus), this protein is Homoserine kinase.